A 531-amino-acid polypeptide reads, in one-letter code: MSAYQNEIKAVAALKEKNGSSWSAINPEYAARMRIQNRFKTGLDIAKYTAAIMRKDMAEYDADSSVYTQSLGCWHGFIGQQKLISIKKHLKTTNKRYLYLSGWMVAALRSDFGPLPDQSMHEKTAVSGLIEELYTFLRQADARELDLLFTGLDAARAAGDKAKEAELLAQIDNFETHVVPIIADIDAGFGNAEATYLLAKKMIEAGACCIQIENQVSDEKQCGHQDGKVTVPHIDFLAKINAVRYAFLELGVDDGVIVARTDSLGAGLTKQIAVTNEPGDLGDLYNSFLDCEEISESELGNGDVVIKREGKLLRPKRLASNLFQFRKGTGEDRCVLDCITSLQNGADLLWIETEKPHVGQIKAMVDRIREVIPNAKLVYNNSPSFNWTLNFRQQVFDAFVAEGKDVSAYDRNKLMSVEYDDTELAKVADEKIRTFQRDGSAHAGIFHHLITLPTYHTAALSTDNLAKGYFADEGMLAYVKGVQRQELRQGIACVKHQNMAGSDIGDNHKEYFAGEAALKASGKDNTMNQFH.

Substrate is bound at residue 101-103 (SGW). A Mg(2+)-binding site is contributed by aspartate 184. Cysteine 222 (proton acceptor) is an active-site residue. Substrate contacts are provided by residues 223 to 224 (GH), 380 to 384 (NNSPS), and threonine 451.

It belongs to the isocitrate lyase/PEP mutase superfamily. Isocitrate lyase family. Homotetramer. Mg(2+) serves as cofactor.

The enzyme catalyses D-threo-isocitrate = glyoxylate + succinate. The protein operates within carbohydrate metabolism; glyoxylate cycle; (S)-malate from isocitrate: step 1/2. Its function is as follows. Involved in the metabolic adaptation in response to environmental changes. Catalyzes the reversible formation of succinate and glyoxylate from isocitrate, a key step of the glyoxylate cycle, which operates as an anaplerotic route for replenishing the tricarboxylic acid cycle during growth on fatty acid substrates. The polypeptide is Isocitrate lyase (Pseudomonas aeruginosa (strain ATCC 15692 / DSM 22644 / CIP 104116 / JCM 14847 / LMG 12228 / 1C / PRS 101 / PAO1)).